The primary structure comprises 208 residues: Transcription factor atf-4 homolog (208 aa).

Disordered regions lie at residues 18 to 47 (HNQT…YFNP) and 106 to 165 (ERRS…EKEE). Residues 110–120 (NSSASPASNWS) show a composition bias toward low complexity. Residues 121 to 141 (SDEHDSQSEKSYHPYKTPEKK) are compositionally biased toward basic and acidic residues. The bZIP domain maps to 138-201 (PEKKERKKAQ…RYFKKFMTEM (64 aa)). The tract at residues 140-163 (KKERKKAQNRLAATRYREKKRREK) is basic motif. A leucine-zipper region spans residues 173-187 (LSVTNGKLKDQVSEL).

This sequence belongs to the bZIP family.

Its subcellular location is the nucleus. Functionally, transcription factor. Involved in positively modulating longevity and stress tolerance, probably acting by positively regulating expression of transsulfuration enzyme cth-2, leading to increased hydrogen sulfide production and therefore increased protein persulfidation, a protective modification of redox-reactive cysteines. May mediate longevity and increased stress resistance induced by mTORC1 suppression. The chain is Transcription factor atf-4 homolog from Caenorhabditis elegans.